A 395-amino-acid polypeptide reads, in one-letter code: MILTSESVTEGHPDKLCDQISDAILDGVICKDKNARAGIETIAGNGVVHVFGEVSNPDSVDIPGIIRKTILDIGYTSEDAGIDGNTCSIQESITSQSKEIADAVNFSLEYRNQQGDLGRNSFSQQGSGDQGSVFGYACRETPEMMPLPITIAHKLAYSLAFVRKEKILPYLLPDGKSQVTLGYDSANRPKTLETVVISAQHEDSVDLDKLRFDILERVVRPVISATGLDCSKATFLINPAGRFVTGGPSADSGLTGRKIVVDTYGCAAKHGGGALSGKDPSKLDRFASYMARWVAKHVVAADFAESIEVQISYAIGKAHPVAFNIDTHGTNTIALDKLKRAILKVFDFRPAAVIDSLDLKRPIYQKTAAYGHFGRDIFTWERICPDKLNALLGAV.

ATP is bound at residue H12. Residue D14 participates in Mg(2+) binding. E40 contributes to the K(+) binding site. L-methionine-binding residues include E53 and Q96. Residues 96–106 (QSKEIADAVNF) form a flexible loop region. ATP is bound by residues 174 to 176 (DGK), 242 to 243 (RF), D251, 257 to 258 (RK), A274, and K278. Position 251 (D251) interacts with L-methionine. L-methionine is bound at residue K282.

The protein belongs to the AdoMet synthase family. In terms of assembly, homotetramer; dimer of dimers. It depends on Mg(2+) as a cofactor. K(+) is required as a cofactor.

The protein localises to the cytoplasm. The enzyme catalyses L-methionine + ATP + H2O = S-adenosyl-L-methionine + phosphate + diphosphate. The protein operates within amino-acid biosynthesis; S-adenosyl-L-methionine biosynthesis; S-adenosyl-L-methionine from L-methionine: step 1/1. Functionally, catalyzes the formation of S-adenosylmethionine (AdoMet) from methionine and ATP. The overall synthetic reaction is composed of two sequential steps, AdoMet formation and the subsequent tripolyphosphate hydrolysis which occurs prior to release of AdoMet from the enzyme. The protein is S-adenosylmethionine synthase of Tropheryma whipplei (strain Twist) (Whipple's bacillus).